A 316-amino-acid polypeptide reads, in one-letter code: Pantothenate kinase (316 aa).

Residue 95–102 coordinates ATP; that stretch reads GSVAVGKS.

The protein belongs to the prokaryotic pantothenate kinase family.

The protein localises to the cytoplasm. The enzyme catalyses (R)-pantothenate + ATP = (R)-4'-phosphopantothenate + ADP + H(+). It functions in the pathway cofactor biosynthesis; coenzyme A biosynthesis; CoA from (R)-pantothenate: step 1/5. The sequence is that of Pantothenate kinase from Erwinia tasmaniensis (strain DSM 17950 / CFBP 7177 / CIP 109463 / NCPPB 4357 / Et1/99).